The chain runs to 452 residues: Ribosomal L1 domain-containing protein 1 (452 aa).

The residue at position 1 (Met1) is an N-acetylmethionine. Glycyl lysine isopeptide (Lys-Gly) (interchain with G-Cter in SUMO2) cross-links involve residues Lys119 and Lys253. The stretch at 277–350 forms a coiled coil; it reads LRSLRKQELK…QKVTEECEEA (74 aa). Residues 283–452 form a disordered region; that stretch reads QELKKRKREN…DKKTKAAHSN (170 aa). The span at 292–301 shows a compositional bias: basic and acidic residues; the sequence is NAKLKKESKM. Polar residues predominate over residues 309-319; sequence ATSLLTQSGLA. A compositionally biased stretch (basic residues) spans 330 to 341; sequence QKKKTNKAHKKQ. Residues Thr334, Thr344, Thr360, Thr399, and Thr407 each carry the phosphothreonine modification. Positions 414-423 are enriched in basic and acidic residues; the sequence is KDVQEFRKPE. A compositionally biased stretch (polar residues) spans 425-440; the sequence is SSFSTPRKSGKKASNT. Thr429 bears the Phosphothreonine mark. An N6-acetyllysine modification is found at Lys432. Residue Ser433 is modified to Phosphoserine.

Belongs to the universal ribosomal protein uL1 family. Highly divergent. As to quaternary structure, interacts with ING1. Interacts with KPNA7 and KPNA2.

It localises to the nucleus. The protein localises to the nucleolus. In terms of biological role, regulates cellular senescence through inhibition of PTEN translation. Acts as a pro-apoptotic regulator in response to DNA damage. The chain is Ribosomal L1 domain-containing protein 1 from Mus musculus (Mouse).